The primary structure comprises 396 residues: tRNA(Met) cytidine acetate ligase (396 aa).

Residues 9-22 (IVEY…HLHH), glycine 103, asparagine 154, and arginine 179 each bind ATP.

Belongs to the TmcAL family.

Its subcellular location is the cytoplasm. It catalyses the reaction cytidine(34) in elongator tRNA(Met) + acetate + ATP = N(4)-acetylcytidine(34) in elongator tRNA(Met) + AMP + diphosphate. Its function is as follows. Catalyzes the formation of N(4)-acetylcytidine (ac(4)C) at the wobble position of elongator tRNA(Met), using acetate and ATP as substrates. First activates an acetate ion to form acetyladenylate (Ac-AMP) and then transfers the acetyl group to tRNA to form ac(4)C34. The polypeptide is tRNA(Met) cytidine acetate ligase (Fusobacterium nucleatum subsp. nucleatum (strain ATCC 25586 / DSM 15643 / BCRC 10681 / CIP 101130 / JCM 8532 / KCTC 2640 / LMG 13131 / VPI 4355)).